A 1550-amino-acid polypeptide reads, in one-letter code: Cellulose synthase 1 (1550 aa).

Residues 1 to 741 (MPEVRSSTQS…KERVLKGTVK (741 aa)) form a catalytic region. Helical transmembrane passes span 26 to 46 (GAGLIIGVFGLCALIAATSVT), 47 to 67 (LPPEQQLIVAFVCVVIFFIVG), and 106 to 126 (GLLGTMLLVAELYALMMLFLS). Positions 147 to 240 (EWPTVDIFVP…YILIFDCDHV (94 aa)) are catalytic subdomain A. Residue aspartate 189 is part of the active site. Substrate-binding residues include aspartate 236 and aspartate 238. Residues 317-377 (TAIEQIGGFA…GQRVRWARGM (61 aa)) are catalytic subdomain B. The active site involves aspartate 333. A run of 5 helical transmembrane segments spans residues 398-418 (LCYLSAMTSFLFAVPRVIFLS), 423-443 (FLFFGQNIIAASPLALLAYAI), 468-488 (VYETTMALFLVRVTIVTLLSP), 507-527 (FDLGAVYPNIILGLIMFGGLA), and 547-567 (LLNSAWAMLSLIIILAAIAVG). Residues 572-647 (QKRNSHRIPA…PARIIRAGNG (76 aa)) form the PilZ domain. Disordered regions lie at residues 708-731 (VHRSSPTKPSAGNALSDDTNNPSR) and 768-813 (APAH…QPLA). The interval 742 to 1550 (MVSLLALLTF…KQLEDERRKS (809 aa)) is cyclic di-GMP binding domain. Residues 768–796 (APAHQPEASDLPPLPALLPATSGAAQAGS) are compositionally biased toward low complexity. A helical membrane pass occupies residues 1513–1533 (VLLVGLLGCILIVSVLARALA).

This sequence in the N-terminal section; belongs to the glycosyltransferase 2 family. It in the C-terminal section; belongs to the AcsB/BcsB family. The cofactor is Mg(2+).

It is found in the cell inner membrane. It catalyses the reaction [(1-&gt;4)-beta-D-glucosyl](n) + UDP-alpha-D-glucose = [(1-&gt;4)-beta-D-glucosyl](n+1) + UDP + H(+). It participates in glycan metabolism; bacterial cellulose biosynthesis. Its function is as follows. Bifunctional protein comprised of a catalytic subunit and a regulatory subunit. The catalytic subunit of cellulose synthase polymerizes uridine 5'-diphosphate glucose to cellulose in a processive way. The thick cellulosic mats generated by this enzyme probably provide a specialized protective environment to the bacterium. The regulatory subunit binds bis-(3'-5') cyclic diguanylic acid (c-di-GMP). The chain is Cellulose synthase 1 (acsAB) from Novacetimonas hansenii (Komagataeibacter hansenii).